We begin with the raw amino-acid sequence, 598 residues long: Autophagy-related protein 22-1 (598 aa).

Residues 1–20 (MEDGGAGLRAPRYPAEDTSP) are disordered. The chain crosses the membrane as a helical span at residues 28–48 (GFFCYGLAAEVFAVCAVGSFL). 2 N-linked (GlcNAc...) asparagine glycosylation sites follow: Asn-74 and Asn-80. The next 3 membrane-spanning stretches (helical) occupy residues 111–131 (SFAMYTFSASVFMQALALVSV), 159–179 (FLLVVPQIFVVGSFLTVICVV), and 182–202 (GCSFVILNSYLPLLVLNHPVV). Positions 207-238 (DHPTASSSIPLQPISPQRSSRKSEESLHQVNR) are disordered. The span at 212–224 (SSSIPLQPISPQR) shows a compositional bias: low complexity. The segment covering 227 to 238 (RKSEESLHQVNR) has biased composition (basic and acidic residues). The chain crosses the membrane as a helical span at residues 263 to 283 (VGIGYMAAVSVQVICILILYI). Asn-285 carries N-linked (GlcNAc...) asparagine glycosylation. 7 consecutive transmembrane segments (helical) span residues 297–317 (TVLFFVGSWWLTFTIPSVMWL), 363–383 (VLLFLIAWFLLSDAVATISAT), 400–420 (ALLSIIATSSGIIGATVWPII), 431–451 (IIVCCLLLLELVPLYGLLGFL), 465–485 (WYEIYPLGIIHGMVMGGLSSY), 489–509 (FYGLLIPPGSEAAFYALFAIT), and 534–554 (AFGFLAVLIALPIPLIWMVDV). The disordered stretch occupies residues 575-598 (HEDFESFEGSSDGHEAEGLMRDHD). The span at 585–598 (SDGHEAEGLMRDHD) shows a compositional bias: basic and acidic residues.

The protein belongs to the ATG22 family.

The protein localises to the vacuole membrane. In terms of biological role, vacuolar effluxer which mediate the efflux of amino acids resulting from autophagic degradation. The release of autophagic amino acids allows the maintenance of protein synthesis and viability during nitrogen starvation. The polypeptide is Autophagy-related protein 22-1 (atg22-1) (Sclerotinia sclerotiorum (strain ATCC 18683 / 1980 / Ss-1) (White mold)).